A 594-amino-acid chain; its full sequence is Potassium-transporting ATPase potassium-binding subunit (594 aa).

10 helical membrane-spanning segments follow: residues 3-23 (ADFLGLLLLYLTILLCAAPLL), 67-87 (AVAMLVFNVLGVLAVYALQRL), 136-156 (ALTVQNFVSAATGIAVLIALV), 179-199 (LYVLLPLSFILALALVSQGVV), 287-307 (LEMLAILLIPAALCWTFGEMV), 314-334 (VAILAAMTVLFAGFAASAAYF), 415-435 (GLYGMLAFAILAVFIAGLMIG), 453-473 (VALVILATPALVLAGTAVAVL), 519-539 (VLLGLAMWFGRYTIIVAILAL), and 562-582 (LFVALLVGAVLLVGALTYVPA).

This sequence belongs to the KdpA family. As to quaternary structure, the system is composed of three essential subunits: KdpA, KdpB and KdpC.

The protein localises to the cell inner membrane. In terms of biological role, part of the high-affinity ATP-driven potassium transport (or Kdp) system, which catalyzes the hydrolysis of ATP coupled with the electrogenic transport of potassium into the cytoplasm. This subunit binds the periplasmic potassium ions and delivers the ions to the membrane domain of KdpB through an intramembrane tunnel. The polypeptide is Potassium-transporting ATPase potassium-binding subunit (Bordetella parapertussis (strain 12822 / ATCC BAA-587 / NCTC 13253)).